The following is a 533-amino-acid chain: Glucose-6-phosphate isomerase (533 aa).

E341 (proton donor) is an active-site residue. Active-site residues include H372 and K501.

It belongs to the GPI family.

The protein resides in the cytoplasm. It carries out the reaction alpha-D-glucose 6-phosphate = beta-D-fructose 6-phosphate. The protein operates within carbohydrate biosynthesis; gluconeogenesis. It participates in carbohydrate degradation; glycolysis; D-glyceraldehyde 3-phosphate and glycerone phosphate from D-glucose: step 2/4. In terms of biological role, catalyzes the reversible isomerization of glucose-6-phosphate to fructose-6-phosphate. In Cereibacter sphaeroides (strain ATCC 17029 / ATH 2.4.9) (Rhodobacter sphaeroides), this protein is Glucose-6-phosphate isomerase.